Reading from the N-terminus, the 366-residue chain is Histidinol-phosphate aminotransferase 2 (366 aa).

A compositionally biased stretch (polar residues) spans 1-11 (MQVKDQLSSLQ). The tract at residues 1–21 (MQVKDQLSSLQPYKPGKSPEQ) is disordered. Lysine 222 carries the post-translational modification N6-(pyridoxal phosphate)lysine.

The protein belongs to the class-II pyridoxal-phosphate-dependent aminotransferase family. Histidinol-phosphate aminotransferase subfamily. As to quaternary structure, homodimer. Requires pyridoxal 5'-phosphate as cofactor.

It carries out the reaction L-histidinol phosphate + 2-oxoglutarate = 3-(imidazol-4-yl)-2-oxopropyl phosphate + L-glutamate. The protein operates within amino-acid biosynthesis; L-histidine biosynthesis; L-histidine from 5-phospho-alpha-D-ribose 1-diphosphate: step 7/9. The chain is Histidinol-phosphate aminotransferase 2 from Bacillus cereus (strain ATCC 10987 / NRS 248).